The sequence spans 253 residues: Tetraspanin-11 (253 aa).

4 helical membrane passes run 19-39, 63-83, 90-110, and 220-240; these read LLFIFNFFFWVGGAAVMAVGV, ILIFAGALVMVTGFLGFGAVI, LSAYFCLLLAIFLVELVAGVL, and LLLMGAVGIGVACLQICGMIL.

The protein belongs to the tetraspanin (TM4SF) family.

The protein localises to the membrane. This chain is Tetraspanin-11 (TSPAN11), found in Bos taurus (Bovine).